We begin with the raw amino-acid sequence, 192 residues long: CASP-like protein 2U1 (192 aa).

The Cytoplasmic portion of the chain corresponds to 1–11 (MASRKQGAREG). A helical transmembrane segment spans residues 12 to 32 (LWSMGVRLLTTLLCITSLILL). The Extracellular portion of the chain corresponds to 33–58 (LKAKQTVRRALGLGYIAQTVKYSDTS). Residues 59–79 (GFIYLVYINILVAAYGLIVFV) form a helical membrane-spanning segment. The Cytoplasmic portion of the chain corresponds to 80–96 (SLIPSALGKSCSGKCSR). Residues 97-117 (WTIFVLDQVFAYVLLSAVSAA) traverse the membrane as a helical segment. The Extracellular portion of the chain corresponds to 118–145 (TEVLYLADKGMSKTQWEALCPTYGFFCH). Residues 146–166 (MVSASVAIGSVAVVLLAVLSV) traverse the membrane as a helical segment. Topologically, residues 167–192 (SSAQSLFHNFYTRALYTTKMRHSSLT) are cytoplasmic.

Belongs to the Casparian strip membrane proteins (CASP) family. Homodimer and heterodimers.

It is found in the cell membrane. The chain is CASP-like protein 2U1 from Adiantum capillus-veneris (Maidenhair fern).